The primary structure comprises 729 residues: Rab-like protein 6 (729 aa).

Met-1 is modified (N-acetylmethionine). The segment at 39-279 (GVQYNMKIVI…IFLEMMEARS (241 aa)) is small GTPase-like. Residues 50–57 (GDRNTGKT), 100–104 (DVVDK), and 177–179 (YRD) contribute to the GTP site. The tract at residues 281 to 729 (GHASPLAANG…HPGGGDYEEL (449 aa)) is disordered. The segment covering 290–315 (GQSPSPGSQSPVVPAGAVSTGSSSPG) has biased composition (low complexity). Over residues 331-351 (SSVPPVPPSEALPPPACPSAP) the composition is skewed to pro residues. A compositionally biased stretch (basic and acidic residues) spans 395–416 (PDDRLDRSFLEDTTPARDEKKV). Phosphoserine occurs at positions 402, 425, 427, 470, 471, 492, 525, and 577. Residues 489 to 502 (QQCSEPETKWSSIP) show a composition bias toward polar residues. Residues 581–595 (DTQRRADDFPVRDDP) show a composition bias toward basic and acidic residues. A Phosphoserine modification is found at Ser-596. The segment covering 596-605 (SDVTDEDEGP) has biased composition (acidic residues). A Phosphothreonine modification is found at Thr-599. Over residues 606–615 (AEPPPPPKLP) the composition is skewed to pro residues. The segment covering 635 to 652 (AGPKESSEEGKEGKTPSK) has biased composition (basic and acidic residues). Ser-640 and Ser-641 each carry phosphoserine. Residues 655-693 (KKKKKKGKEEEEKAAKKKSKHKKSKDKEEGKEERRRRQQ) form an interaction with CDKN2A region. Positions 669 to 678 (AKKKSKHKKS) are enriched in basic residues. The span at 679–689 (KDKEEGKEERR) shows a compositional bias: basic and acidic residues. The segment covering 711–729 (LGGGAPGGRHPGGGDYEEL) has biased composition (gly residues).

This sequence belongs to the small GTPase superfamily. Rab family. In terms of processing, isoform 1 is O-glycosylated, while other isoforms are not.

It localises to the cytoplasm. It is found in the nucleus. Its function is as follows. May enhance cellular proliferation. May reduce growth inhibitory activity of CDKN2A. This chain is Rab-like protein 6 (RABL6), found in Homo sapiens (Human).